We begin with the raw amino-acid sequence, 155 residues long: MTLKRNGNDAPLRIVRLDKELPLPRRAHPTDAGIDLYTAQDVTIAPGCRELVGTGIAIALPVGTVGLVHPRSGLALKKGLSIVNAPGTIDADYRGEIKVCLINLDPEEPIELARGERIAQLLVQEVSLCDVEEVNSVEELGVTVRGESGYGSTGV.

Substrate-binding positions include 71-73, Asn84, 88-90, and Lys98; these read RSG and TID.

Belongs to the dUTPase family. Mg(2+) is required as a cofactor.

The catalysed reaction is dUTP + H2O = dUMP + diphosphate + H(+). Its pathway is pyrimidine metabolism; dUMP biosynthesis; dUMP from dCTP (dUTP route): step 2/2. In terms of biological role, this enzyme is involved in nucleotide metabolism: it produces dUMP, the immediate precursor of thymidine nucleotides and it decreases the intracellular concentration of dUTP so that uracil cannot be incorporated into DNA. In Corynebacterium jeikeium (strain K411), this protein is Deoxyuridine 5'-triphosphate nucleotidohydrolase.